The chain runs to 212 residues: Golgi SNAP receptor complex member 2 (212 aa).

At Met-1 the chain carries N-acetylmethionine. Over 1–190 (MDPLFQQTHK…LIEKRAFQDK (190 aa)) the chain is Cytoplasmic. The stretch at 61-107 (NKRQNARLRVDQLKYDVQHLQTALRNFQHRRHAREQQERQREELLSR) forms a coiled coil. An IxM motif; signal for cargo packaging into COPII-coated vesicles motif is present at residues 118 to 120 (IPM). Residues 191–211 (YFMIGGMLLTCVVMFLVVQYL) traverse the membrane as a helical; Anchor for type IV membrane protein segment. A topological domain (vesicular) is located at residue Thr-212.

Belongs to the GOSR2 family. As to quaternary structure, part of a unique SNARE complex composed of the Golgi SNAREs GOSR1, STX5 and YKT6. Interacts (via IxM motif) with SEC24C and SEC24D; mediates GOSR2 packaging into COPII-coated vesicles. Interacts with BET1.

The protein resides in the golgi apparatus. It localises to the cis-Golgi network membrane. Its subcellular location is the golgi apparatus membrane. The protein localises to the endoplasmic reticulum membrane. Involved in transport of proteins from the cis/medial-Golgi to the trans-Golgi network. This Homo sapiens (Human) protein is Golgi SNAP receptor complex member 2 (GOSR2).